Here is a 116-residue protein sequence, read N- to C-terminus: Photosystem II reaction center Psb28 protein (116 aa).

The protein belongs to the Psb28 family. As to quaternary structure, part of the photosystem II complex.

Its subcellular location is the plastid. It localises to the chloroplast thylakoid membrane. This Guillardia theta (Cryptophyte) protein is Photosystem II reaction center Psb28 protein.